Reading from the N-terminus, the 157-residue chain is ATP synthase subunit b' (157 aa).

A helical transmembrane segment spans residues 22–42 (ATLPLIAIQFLLLVAVLNSLF).

This sequence belongs to the ATPase B chain family. In terms of assembly, F-type ATPases have 2 components, F(1) - the catalytic core - and F(0) - the membrane proton channel. F(1) has five subunits: alpha(3), beta(3), gamma(1), delta(1), epsilon(1). F(0) has four main subunits: a(1), b(1), b'(1) and c(10-14). The alpha and beta chains form an alternating ring which encloses part of the gamma chain. F(1) is attached to F(0) by a central stalk formed by the gamma and epsilon chains, while a peripheral stalk is formed by the delta, b and b' chains.

It localises to the cellular thylakoid membrane. F(1)F(0) ATP synthase produces ATP from ADP in the presence of a proton or sodium gradient. F-type ATPases consist of two structural domains, F(1) containing the extramembraneous catalytic core and F(0) containing the membrane proton channel, linked together by a central stalk and a peripheral stalk. During catalysis, ATP synthesis in the catalytic domain of F(1) is coupled via a rotary mechanism of the central stalk subunits to proton translocation. In terms of biological role, component of the F(0) channel, it forms part of the peripheral stalk, linking F(1) to F(0). The b'-subunit is a diverged and duplicated form of b found in plants and photosynthetic bacteria. This chain is ATP synthase subunit b', found in Synechococcus sp. (strain JA-2-3B'a(2-13)) (Cyanobacteria bacterium Yellowstone B-Prime).